We begin with the raw amino-acid sequence, 404 residues long: Voltage-gated potassium channel subunit beta-3 (404 aa).

The span at 1–14 (MQVSIACTEQNLRS) shows a compositional bias: polar residues. Positions 1 to 77 (MQVSIACTEQ…LRESTGRGTG (77 aa)) are disordered. Gly residues predominate over residues 28–50 (PGGGNGGPAGGGHGNPPGGGGSG). 4 residues coordinate NADP(+): Thr-97, Trp-98, Gln-104, and Asp-126. The active-site Proton donor/acceptor is the Tyr-131. The NADP(+) site is built by Asn-199, Ser-229, Arg-230, Gln-255, Trp-284, Pro-286, Leu-287, Ala-288, Cys-289, Lys-295, Arg-305, Gly-364, Ser-366, Gln-370, and Glu-373.

The protein belongs to the shaker potassium channel beta subunit family. As to quaternary structure, forms heteromultimeric complex with alpha subunits. Interacts with KCNA5 and KCNB2. Brain specific. Most prominent expression in cerebellum. Weaker signals detected in cortex, occipital lobe, frontal lobe and temporal lobe. Not detected in spinal cord, heart, lung, liver, kidney, pancreas, placenta and skeletal muscle.

It is found in the cytoplasm. Regulatory subunit of the voltage-gated potassium (Kv) channels composed of pore-forming and potassium-conducting alpha subunits and of regulatory beta subunit. The beta-3/KCNAB3 subunit may mediate closure of potassium channels. Increases inactivation of Kv1.5/KCNA5 alpha subunit-containing channels. May display nicotinamide adenine dinucleotide phosphate (NADPH)-dependent aldoketoreductase activity. The binding of oxidized and reduced NADP(H) cofactors may be required for the regulation of potassium channel activity. This is Voltage-gated potassium channel subunit beta-3 from Homo sapiens (Human).